Reading from the N-terminus, the 48-residue chain is Palustrin-3a (48 aa).

Cys-43 and Cys-48 are disulfide-bonded.

As to expression, expressed by the skin glands.

It is found in the secreted. Its function is as follows. Antimicrobial activity against Gram-negative bacterium E.coli. The sequence is that of Palustrin-3a from Lithobates palustris (Pickerel frog).